The chain runs to 295 residues: Fatty acid desaturase 4-like 1, chloroplastic (295 aa).

Residues 1-29 (MAVSFQTKNPLRPITNIPRSYGPTRVRVT) constitute a chloroplast transit peptide. 3 helical membrane passes run 72 to 92 (WVAA…IGGF), 102 to 122 (LACY…HWAI), and 175 to 195 (LAIN…CILL).

This sequence belongs to the fatty acid desaturase CarF family.

It localises to the plastid. It is found in the chloroplast membrane. Its pathway is lipid metabolism; fatty acid metabolism. Fatty acid desaturase involved in the production of chloroplast-specific phosphatidylglycerol molecular species. Catalyzes the formation of a trans double bond introduced close to the carboxyl group of palmitic acid, which is specifically esterified to the sn-2 glyceryl carbon of phosphatidylglycerol. This chain is Fatty acid desaturase 4-like 1, chloroplastic (FAD4L1), found in Arabidopsis thaliana (Mouse-ear cress).